A 95-amino-acid polypeptide reads, in one-letter code: Aspartyl/glutamyl-tRNA(Asn/Gln) amidotransferase subunit C (95 aa).

It belongs to the GatC family. As to quaternary structure, heterotrimer of A, B and C subunits.

It carries out the reaction L-glutamyl-tRNA(Gln) + L-glutamine + ATP + H2O = L-glutaminyl-tRNA(Gln) + L-glutamate + ADP + phosphate + H(+). It catalyses the reaction L-aspartyl-tRNA(Asn) + L-glutamine + ATP + H2O = L-asparaginyl-tRNA(Asn) + L-glutamate + ADP + phosphate + 2 H(+). In terms of biological role, allows the formation of correctly charged Asn-tRNA(Asn) or Gln-tRNA(Gln) through the transamidation of misacylated Asp-tRNA(Asn) or Glu-tRNA(Gln) in organisms which lack either or both of asparaginyl-tRNA or glutaminyl-tRNA synthetases. The reaction takes place in the presence of glutamine and ATP through an activated phospho-Asp-tRNA(Asn) or phospho-Glu-tRNA(Gln). This is Aspartyl/glutamyl-tRNA(Asn/Gln) amidotransferase subunit C from Chlorobium chlorochromatii (strain CaD3).